A 512-amino-acid chain; its full sequence is Lysine--tRNA ligase (512 aa).

Mg(2+) is bound by residues Glu408 and Glu415.

It belongs to the class-II aminoacyl-tRNA synthetase family. As to quaternary structure, homodimer. Mg(2+) is required as a cofactor.

It is found in the cytoplasm. It catalyses the reaction tRNA(Lys) + L-lysine + ATP = L-lysyl-tRNA(Lys) + AMP + diphosphate. This chain is Lysine--tRNA ligase, found in Prochlorococcus marinus (strain MIT 9215).